The following is a 358-amino-acid chain: Protein SGT1 homolog B (358 aa).

TPR repeat units follow at residues 2-35 (AKELAEKAKEAFLDDDFDVAVDLYSKAIDLDPNC), 37-69 (AFFADRAQANIKIDNFTEAVVDANKAIELEPTL), and 70-103 (AKAYLRKGTACMKLEEYSTAKAALEKGASVAPNE). The region spanning 157–246 (KPMFRHEFYQ…AEIITWASLE (90 aa)) is the CS domain. The tract at residues 255 to 275 (PKPNVSSALSQRPVYPSSKPA) is disordered. In terms of domain architecture, SGS spans 268–358 (VYPSSKPAKD…DGMELKKWEY (91 aa)).

This sequence belongs to the SGT1 family. In terms of assembly, interacts with RAR1 and HSP90-2. Interacts (via SGS domain) with HSC70-1 and HSC70-3.

The protein resides in the cytoplasm. It localises to the nucleus. In terms of biological role, involved in plant innate immunity. Essential for race-specific resistance conferred by multiple R genes, including RPP7, recognizing different oomycete pathogen isolates like avirulent Hyaloperonospora arabidopsidis (downy mildew). Contributes additively with RAR1 to RPP5-dependent resistance. Not required for RPM1, RPS2, RPS4 and RPS5-mediated resistance. Functions as a negative regulator of RPS5 accumulation by assisting its degradation. May be involved in heat shock response by associating with HSC70-1 chaperone. Required for the SCF(TIR1)-mediated degradation of Aux/IAA proteins, but maybe not for SCF(TIR1) assembly or binding to its Aux/IAA substrates. Probably required for SCF-mediated ubiquitination, by coupling HSP90 to SCF complex for ubiquitination of HSP90 client proteins. Required for the coronatine/jasmonic acid-mediated signal transduction pathway. The chain is Protein SGT1 homolog B from Arabidopsis thaliana (Mouse-ear cress).